The following is a 279-amino-acid chain: Tryptophan synthase alpha chain (279 aa).

Residues glutamate 50 and aspartate 61 each act as proton acceptor in the active site.

Belongs to the TrpA family. As to quaternary structure, tetramer of two alpha and two beta chains.

The enzyme catalyses (1S,2R)-1-C-(indol-3-yl)glycerol 3-phosphate + L-serine = D-glyceraldehyde 3-phosphate + L-tryptophan + H2O. It participates in amino-acid biosynthesis; L-tryptophan biosynthesis; L-tryptophan from chorismate: step 5/5. The alpha subunit is responsible for the aldol cleavage of indoleglycerol phosphate to indole and glyceraldehyde 3-phosphate. The chain is Tryptophan synthase alpha chain from Brucella melitensis biotype 1 (strain ATCC 23456 / CCUG 17765 / NCTC 10094 / 16M).